A 95-amino-acid polypeptide reads, in one-letter code: Aspartyl/glutamyl-tRNA(Asn/Gln) amidotransferase subunit C (95 aa).

This sequence belongs to the GatC family. Heterotrimer of A, B and C subunits.

It carries out the reaction L-glutamyl-tRNA(Gln) + L-glutamine + ATP + H2O = L-glutaminyl-tRNA(Gln) + L-glutamate + ADP + phosphate + H(+). The enzyme catalyses L-aspartyl-tRNA(Asn) + L-glutamine + ATP + H2O = L-asparaginyl-tRNA(Asn) + L-glutamate + ADP + phosphate + 2 H(+). Functionally, allows the formation of correctly charged Asn-tRNA(Asn) or Gln-tRNA(Gln) through the transamidation of misacylated Asp-tRNA(Asn) or Glu-tRNA(Gln) in organisms which lack either or both of asparaginyl-tRNA or glutaminyl-tRNA synthetases. The reaction takes place in the presence of glutamine and ATP through an activated phospho-Asp-tRNA(Asn) or phospho-Glu-tRNA(Gln). This is Aspartyl/glutamyl-tRNA(Asn/Gln) amidotransferase subunit C from Rhodopseudomonas palustris (strain ATCC BAA-98 / CGA009).